Reading from the N-terminus, the 198-residue chain is MHYPEPISKLIDSFMKLPGIGPKTAQRLAFHTLDMKEDDVVQFAKALVDVKRELTYCSVCGHITENDPCYICEDKQRDRSVICVVEDDKDVIAMEKMREYKGLYHVLHGSISPMDGIGPEDINIPSLIERLKNDEVSELILAMNPNLEGESTAMYISRLVKPIGIKVTRLAQGLSVGGDLEYADEVTLSKAIAGRTEM.

The C4-type zinc finger occupies 57 to 72; it reads CSVCGHITENDPCYIC. Residues 80–175 form the Toprim domain; that stretch reads SVICVVEDDK…KVTRLAQGLS (96 aa).

It belongs to the RecR family.

Functionally, may play a role in DNA repair. It seems to be involved in an RecBC-independent recombinational process of DNA repair. It may act with RecF and RecO. The polypeptide is Recombination protein RecR (Staphylococcus aureus (strain MSSA476)).